The chain runs to 67 residues: MPQLDTTPWFITILSMIITLFILFQSNMSKYLYPLEPQPKTLKTQLYNAPWETKWTKIYLPHSLHLH.

The chain crosses the membrane as a helical span at residues 8 to 24 (PWFITILSMIITLFILF). Lys54 is modified (N6-acetyllysine; alternate). An N6-succinyllysine; alternate modification is found at Lys54. At Lys57 the chain carries N6-acetyllysine.

This sequence belongs to the ATPase protein 8 family. In terms of assembly, component of the ATP synthase complex composed at least of ATP5F1A/subunit alpha, ATP5F1B/subunit beta, ATP5MC1/subunit c (homooctomer), MT-ATP6/subunit a, MT-ATP8/subunit 8, ATP5ME/subunit e, ATP5MF/subunit f, ATP5MG/subunit g, ATP5MK/subunit k, ATP5MJ/subunit j, ATP5F1C/subunit gamma, ATP5F1D/subunit delta, ATP5F1E/subunit epsilon, ATP5PF/subunit F6, ATP5PB/subunit b, ATP5PD/subunit d, ATP5PO/subunit OSCP. ATP synthase complex consists of a soluble F(1) head domain (subunits alpha(3) and beta(3)) - the catalytic core - and a membrane F(0) domain - the membrane proton channel (subunits c, a, 8, e, f, g, k and j). These two domains are linked by a central stalk (subunits gamma, delta, and epsilon) rotating inside the F1 region and a stationary peripheral stalk (subunits F6, b, d, and OSCP). Interacts with PRICKLE3.

The protein localises to the mitochondrion membrane. In terms of biological role, subunit 8, of the mitochondrial membrane ATP synthase complex (F(1)F(0) ATP synthase or Complex V) that produces ATP from ADP in the presence of a proton gradient across the membrane which is generated by electron transport complexes of the respiratory chain. ATP synthase complex consist of a soluble F(1) head domain - the catalytic core - and a membrane F(1) domain - the membrane proton channel. These two domains are linked by a central stalk rotating inside the F(1) region and a stationary peripheral stalk. During catalysis, ATP synthesis in the catalytic domain of F(1) is coupled via a rotary mechanism of the central stalk subunits to proton translocation. In vivo, can only synthesize ATP although its ATP hydrolase activity can be activated artificially in vitro. Part of the complex F(0) domain. The sequence is that of ATP synthase F(0) complex subunit 8 from Orycteropus afer (Aardvark).